The primary structure comprises 346 residues: Ribosomal RNA small subunit methyltransferase H (346 aa).

Residues 46–48, D63, F90, D113, and Q120 each bind S-adenosyl-L-methionine; that span reads GGY. Residues 270–327 are disordered; it reads GGSAGSRHMPETHMRLPSFTPAVKGAVGPTPEEEERNPRARSAKLRAGIRTENSPLED.

It belongs to the methyltransferase superfamily. RsmH family.

Its subcellular location is the cytoplasm. It carries out the reaction cytidine(1402) in 16S rRNA + S-adenosyl-L-methionine = N(4)-methylcytidine(1402) in 16S rRNA + S-adenosyl-L-homocysteine + H(+). In terms of biological role, specifically methylates the N4 position of cytidine in position 1402 (C1402) of 16S rRNA. This chain is Ribosomal RNA small subunit methyltransferase H, found in Brucella ovis (strain ATCC 25840 / 63/290 / NCTC 10512).